Here is a 129-residue protein sequence, read N- to C-terminus: Glycine cleavage system H protein (129 aa).

One can recognise a Lipoyl-binding domain in the interval 24 to 106 (SYTVGITEHA…YGEGWFFRVM (83 aa)). An N6-lipoyllysine modification is found at K65.

It belongs to the GcvH family. In terms of assembly, the glycine cleavage system is composed of four proteins: P, T, L and H. (R)-lipoate is required as a cofactor.

In terms of biological role, the glycine cleavage system catalyzes the degradation of glycine. The H protein shuttles the methylamine group of glycine from the P protein to the T protein. This Shewanella baltica (strain OS185) protein is Glycine cleavage system H protein.